Reading from the N-terminus, the 130-residue chain is Small ribosomal subunit protein uS9 (130 aa).

The protein belongs to the universal ribosomal protein uS9 family.

This is Small ribosomal subunit protein uS9 from Burkholderia thailandensis (strain ATCC 700388 / DSM 13276 / CCUG 48851 / CIP 106301 / E264).